The following is a 374-amino-acid chain: Cell division protein DivIB (374 aa).

Residues 1-90 (MWKISNENDI…EEEHFADRLP (90 aa)) form a disordered region. Residues 1–103 (MWKISNENDI…KTRNKRLYRR (103 aa)) are Cytoplasmic-facing. Residues 39–53 (YLKKQAEEAASKGEN) show a composition bias toward basic and acidic residues. Over residues 56 to 75 (AEVTITLQEQSQEEPQQHLP) the composition is skewed to polar residues. Residues 104–124 (LAFILTCLGTAILVALYFVSP) form a helical membrane-spanning segment. The Extracellular portion of the chain corresponds to 125–374 (LSRLSEVTVS…GENQEVQQAE (250 aa)). The POTRA domain occupies 126-197 (SRLSEVTVSG…NSFKIDIQEY (72 aa)). The tract at residues 325–374 (KESEETGSEVSEDSAVENQEVVDPNAGVATDEANNGTPTNGENQEVQQAE) is disordered. The span at 326–339 (ESEETGSEVSEDSA) shows a compositional bias: acidic residues. Residues 356–374 (EANNGTPTNGENQEVQQAE) are compositionally biased toward polar residues.

This sequence belongs to the FtsQ/DivIB family. DivIB subfamily.

The protein resides in the cell membrane. Its function is as follows. Cell division protein that may be involved in stabilizing or promoting the assembly of the division complex. This chain is Cell division protein DivIB, found in Enterococcus faecalis (strain ATCC 700802 / V583).